The sequence spans 378 residues: Probable G-protein coupled receptor frpr-1 (378 aa).

7 consecutive transmembrane segments (helical) span residues 47–67 (LVVI…GNAL), 85–105 (LFAL…LFFL), 120–140 (AVLS…SVFI), 180–200 (VIVC…YNSP), 243–263 (TIVM…AIVI), 277–297 (IITL…PLTV), and 315–337 (SNLM…GSNF).

The protein belongs to the G-protein coupled receptor 1 family.

Its subcellular location is the cell membrane. This chain is Probable G-protein coupled receptor frpr-1, found in Caenorhabditis elegans.